We begin with the raw amino-acid sequence, 588 residues long: Transcriptional regulatory protein ASH1 (588 aa).

S56 carries the post-translational modification Phosphoserine. Disordered stretches follow at residues 85–109 (SNTAPASPHHMDYNPISSLTPGNSP), 377–398 (SNNSKSNVRKPSKNKISKQASN), and 417–495 (SSVS…TRHT). Over residues 99 to 109 (PISSLTPGNSP) the composition is skewed to polar residues. The segment covering 383 to 392 (NVRKPSKNKI) has biased composition (basic residues). The span at 417-433 (SSVSASSSPSPSTPTKS) shows a compositional bias: low complexity. S465 carries the phosphoserine modification. A compositionally biased stretch (low complexity) spans 470–493 (PRRSSNSSITKKGSRRSSGSSPTR). The GATA-type; atypical zinc-finger motif lies at 499–526 (CVSCHSSDSPCWRPSWSPRKQDQLCNSC).

Component of the RPD3C(L) complex composed of at least ASH1, CTI6, DEP1, PHO23, RPD3, RXT2, RXT3, SAP30, SDS3, SIN3, UME1 and UME6.

The protein localises to the nucleus. Its function is as follows. Component of the RPD3C(L) histone deacetylase complex (HDAC). Responsible for the deacetylation of lysine residues on the N-terminal part of the core histones (H2A, H2B, H3 and H4). Histone deacetylation gives a tag for epigenetic repression and plays an important role in transcriptional regulation, cell cycle progression and developmental events. ASH1 is necessary to repress HO in daughter cells to block mating-type switching through its binding to HO promoter 5'-YTGAT-3' sites. Also involved in pseudohyphal growth. The polypeptide is Transcriptional regulatory protein ASH1 (ASH1) (Saccharomyces cerevisiae (strain ATCC 204508 / S288c) (Baker's yeast)).